A 379-amino-acid polypeptide reads, in one-letter code: dTDP-3-amino-3,4,6-trideoxy-alpha-D-glucose transaminase (379 aa).

Residues Gly67, Gln167, 188 to 193 (SFYPGK), Tyr221, Tyr227, 235 to 237 (NSR), and Tyr318 contribute to the pyridoxal 5'-phosphate site. Position 193 is an N6-(pyridoxal phosphate)lysine (Lys193).

Belongs to the degT/dnrJ/eryC1 family. As to quaternary structure, homodimer. Pyridoxal 5'-phosphate is required as a cofactor.

It carries out the reaction dTDP-3-amino-3,4,6-trideoxy-alpha-D-glucose + 2-oxoglutarate = dTDP-3-dehydro-4,6-dideoxy-alpha-D-glucose + L-glutamate. The protein operates within antibiotic biosynthesis. Involved in the biosynthesis of dTDP-alpha-D-desosamine, a sugar found in several bacterial macrolide antibiotics. Catalyzes the reversible transfer of the amino group from L-glutamate to the C-3 position of dTDP-3-keto-4,6-deoxyglucose to yield dTDP-3-amino-3,4,6-trideoxyglucose. In Streptomyces venezuelae, this protein is dTDP-3-amino-3,4,6-trideoxy-alpha-D-glucose transaminase.